Reading from the N-terminus, the 497-residue chain is Cytochrome P450 2D6 (497 aa).

Aspartate 301 provides a ligand contact to substrate. Residue cysteine 443 participates in heme binding.

It belongs to the cytochrome P450 family. The cofactor is heme.

It localises to the endoplasmic reticulum membrane. The protein resides in the microsome membrane. The catalysed reaction is (5Z,8Z,11Z,14Z)-eicosatetraenoate + reduced [NADPH--hemoprotein reductase] + O2 = (8R,9S)-epoxy-(5Z,11Z,14Z)-eicosatrienoate + oxidized [NADPH--hemoprotein reductase] + H2O + H(+). The enzyme catalyses (5Z,8Z,11Z,14Z)-eicosatetraenoate + reduced [NADPH--hemoprotein reductase] + O2 = (11R,12S)-epoxy-(5Z,8Z,14Z)-eicosatrienoate + oxidized [NADPH--hemoprotein reductase] + H2O + H(+). It catalyses the reaction (5Z,8Z,11Z,14Z)-eicosatetraenoate + reduced [NADPH--hemoprotein reductase] + O2 = (14S,15R)-epoxy-(5Z,8Z,11Z)-eicosatrienoate + oxidized [NADPH--hemoprotein reductase] + H2O + H(+). It carries out the reaction N-(5Z,8Z,11Z,14Z-eicosatetraenoyl)-ethanolamine + reduced [NADPH--hemoprotein reductase] + O2 = N-(8,9-epoxy-5Z,11Z,14Z-eicosatrienoyl)-ethanolamine + oxidized [NADPH--hemoprotein reductase] + H2O + H(+). The catalysed reaction is N-(5Z,8Z,11Z,14Z-eicosatetraenoyl)-ethanolamine + reduced [NADPH--hemoprotein reductase] + O2 = N-(11,12-epoxy-5Z,8Z,14Z-eicosatrienoyl)-ethanolamine + oxidized [NADPH--hemoprotein reductase] + H2O + H(+). The enzyme catalyses N-(5Z,8Z,11Z,14Z-eicosatetraenoyl)-ethanolamine + reduced [NADPH--hemoprotein reductase] + O2 = N-(14,15-epoxy-5Z,8Z,11Z-eicosatrienoyl)-ethanolamine + oxidized [NADPH--hemoprotein reductase] + H2O + H(+). It catalyses the reaction N-(5Z,8Z,11Z,14Z-eicosatetraenoyl)-ethanolamine + reduced [NADPH--hemoprotein reductase] + O2 = N-(20-hydroxy-5Z,8Z,11Z,14Z-eicosatetraenoyl)-ethanolamine + oxidized [NADPH--hemoprotein reductase] + H2O + H(+). It carries out the reaction (5Z,8Z,11Z,14Z,17Z)-eicosapentaenoate + reduced [NADPH--hemoprotein reductase] + O2 = (17S,18R)-epoxy-(5Z,8Z,11Z,14Z)-eicosatetraenoate + oxidized [NADPH--hemoprotein reductase] + H2O + H(+). The catalysed reaction is (4Z,7Z,10Z,13Z,16Z,19Z)-docosahexaenoate + reduced [NADPH--hemoprotein reductase] + O2 = (19R,20S)-epoxy-(4Z,7Z,10Z,13Z,16Z)-docosapentaenoate + oxidized [NADPH--hemoprotein reductase] + H2O + H(+). The enzyme catalyses (4Z,7Z,10Z,13Z,16Z,19Z)-docosahexaenoate + reduced [NADPH--hemoprotein reductase] + O2 = (19S,20R)-epoxy-(4Z,7Z,10Z,13Z,16Z)-docosapentaenoate + oxidized [NADPH--hemoprotein reductase] + H2O + H(+). It catalyses the reaction cholesterol + reduced [NADPH--hemoprotein reductase] + O2 = 25-hydroxycholesterol + oxidized [NADPH--hemoprotein reductase] + H2O + H(+). It carries out the reaction all-trans-retinol + reduced [NADPH--hemoprotein reductase] + O2 = all-trans-retinal + oxidized [NADPH--hemoprotein reductase] + 2 H2O + H(+). Its pathway is cofactor metabolism; retinol metabolism. The protein operates within lipid metabolism; fatty acid metabolism. It functions in the pathway steroid metabolism; cholesterol metabolism. In terms of biological role, a cytochrome P450 monooxygenase involved in the metabolism of fatty acids, steroids and retinoids. Mechanistically, uses molecular oxygen inserting one oxygen atom into a substrate, and reducing the second into a water molecule, with two electrons provided by NADPH via cytochrome P450 reductase (NADPH--hemoprotein reductase). Catalyzes the epoxidation of double bonds of polyunsaturated fatty acids (PUFA). Metabolizes endocannabinoid arachidonoylethanolamide (anandamide) to 20-hydroxyeicosatetraenoic acid ethanolamide (20-HETE-EA) and 8,9-, 11,12-, and 14,15-epoxyeicosatrienoic acid ethanolamides (EpETrE-EAs), potentially modulating endocannabinoid system signaling. Catalyzes the hydroxylation of carbon-hydrogen bonds. Metabolizes cholesterol toward 25-hydroxycholesterol, a physiological regulator of cellular cholesterol homeostasis. Catalyzes the oxidative transformations of all-trans retinol to all-trans retinal, a precursor for the active form all-trans-retinoic acid. Also involved in the oxidative metabolism of drugs such as antiarrhythmics, adrenoceptor antagonists, and tricyclic antidepressants. This chain is Cytochrome P450 2D6 (CYP2D6), found in Pan paniscus (Pygmy chimpanzee).